Consider the following 80-residue polypeptide: uncharacterized protein (80 aa).

The first 15 residues, Met-1–Ala-15, serve as a signal peptide directing secretion. Residues Asn-23 to Ser-44 show a composition bias toward low complexity. A disordered region spans residues Asn-23–Tyr-52. Residues Asn-29, Asn-30, Asn-36, Asn-39, and Asn-64 are each glycosylated (N-linked (GlcNAc...) asparagine).

It localises to the secreted. This is an uncharacterized protein from Dictyostelium discoideum (Social amoeba).